The chain runs to 100 residues: MRLTPHEQERLLLSYAAELARRRQARGLKLNHPEAVAVITDHILEGARDGRTVAELMVSGRAVLGRADVMDGVPEMLHDVQVEATFPDGTKLVTVHHPIP.

It belongs to the urease gamma subunit family. In terms of assembly, heterotrimer of UreA (gamma), UreB (beta) and UreC (alpha) subunits. Three heterotrimers associate to form the active enzyme.

The protein localises to the cytoplasm. It catalyses the reaction urea + 2 H2O + H(+) = hydrogencarbonate + 2 NH4(+). The protein operates within nitrogen metabolism; urea degradation; CO(2) and NH(3) from urea (urease route): step 1/1. This Mycolicibacterium vanbaalenii (strain DSM 7251 / JCM 13017 / BCRC 16820 / KCTC 9966 / NRRL B-24157 / PYR-1) (Mycobacterium vanbaalenii) protein is Urease subunit gamma.